Here is a 263-residue protein sequence, read N- to C-terminus: MPRPKILLTNDDGINSGGLWAAYDAMSLFADVTVVAPATQQSAVGRSISIFEPLRMNEVTMHGTQAYTVEGRPTDALLLGLYGLGLRPDLVVSGINLGENISFESITTSGTVGAAMEAVNQGVPAIAYSLQMNDEGNKFADPRSHTTDFTQSKDVVTKFTRLFLEKGMPPESKLININIPAEKIEGYKVTVLGERLFETSVEKRIDPRGKPYYWINGTPIYIPEEHSDVTALRKNYVSVTPLSMDNTAFKACPELKKMILDID.

A divalent metal cation is bound by residues aspartate 11, aspartate 12, serine 42, and asparagine 96.

The protein belongs to the SurE nucleotidase family. Requires a divalent metal cation as cofactor.

Its subcellular location is the cytoplasm. It carries out the reaction a ribonucleoside 5'-phosphate + H2O = a ribonucleoside + phosphate. Nucleotidase that shows phosphatase activity on nucleoside 5'-monophosphates. The chain is 5'-nucleotidase SurE from Methanocorpusculum labreanum (strain ATCC 43576 / DSM 4855 / Z).